We begin with the raw amino-acid sequence, 990 residues long: Bifunctional glutamine synthetase adenylyltransferase/adenylyl-removing enzyme (990 aa).

The segment at 1 to 474 (MPTDNENSMT…HFNELVEESQ (474 aa)) is adenylyl removase. The adenylyl transferase stretch occupies residues 484 to 990 (FIACQDAWRL…WDTLFGTCSE (507 aa)).

The protein belongs to the GlnE family. Mg(2+) is required as a cofactor.

It catalyses the reaction [glutamine synthetase]-O(4)-(5'-adenylyl)-L-tyrosine + phosphate = [glutamine synthetase]-L-tyrosine + ADP. It carries out the reaction [glutamine synthetase]-L-tyrosine + ATP = [glutamine synthetase]-O(4)-(5'-adenylyl)-L-tyrosine + diphosphate. Involved in the regulation of glutamine synthetase GlnA, a key enzyme in the process to assimilate ammonia. When cellular nitrogen levels are high, the C-terminal adenylyl transferase (AT) inactivates GlnA by covalent transfer of an adenylyl group from ATP to specific tyrosine residue of GlnA, thus reducing its activity. Conversely, when nitrogen levels are low, the N-terminal adenylyl removase (AR) activates GlnA by removing the adenylyl group by phosphorolysis, increasing its activity. The regulatory region of GlnE binds the signal transduction protein PII (GlnB) which indicates the nitrogen status of the cell. This chain is Bifunctional glutamine synthetase adenylyltransferase/adenylyl-removing enzyme, found in Alteromonas mediterranea (strain DSM 17117 / CIP 110805 / LMG 28347 / Deep ecotype).